The chain runs to 149 residues: Putative pre-16S rRNA nuclease (149 aa).

It belongs to the YqgF nuclease family.

The protein resides in the cytoplasm. Could be a nuclease involved in processing of the 5'-end of pre-16S rRNA. The sequence is that of Putative pre-16S rRNA nuclease from Synechococcus sp. (strain ATCC 27144 / PCC 6301 / SAUG 1402/1) (Anacystis nidulans).